A 1115-amino-acid chain; its full sequence is Carbamoyl phosphate synthase large chain (1115 aa).

A carboxyphosphate synthetic domain region spans residues 1-407 (MPRRTDLHHV…ALGKVMRSLE (407 aa)). Residues arginine 134, arginine 174, glycine 180, glycine 181, glutamate 213, isoleucine 215, glutamate 220, glycine 246, valine 247, histidine 248, glutamine 290, and glutamate 304 each contribute to the ATP site. The ATP-grasp 1 domain maps to 138–333 (KDIVAKAGGE…IAKIAAKLAI (196 aa)). Mg(2+) contacts are provided by glutamine 290, glutamate 304, and asparagine 306. Mn(2+) contacts are provided by glutamine 290, glutamate 304, and asparagine 306. Residues 408–559 (TTRAGFWTAP…ELDPAAETEV (152 aa)) are oligomerization domain. Positions 560–965 (APQTERPKVL…AFAKSQTAAY (406 aa)) are carbamoyl phosphate synthetic domain. An ATP-grasp 2 domain is found at 693–884 (GDLLSAAGLP…LAKACARIML (192 aa)). Positions 729, 768, 770, 775, 800, 801, 802, 803, 843, and 855 each coordinate ATP. Positions 843, 855, and 857 each coordinate Mg(2+). Mn(2+) contacts are provided by glutamine 843, glutamate 855, and asparagine 857. Residues 966 to 1113 (GSLPAQGTVF…QELHRVIGGV (148 aa)) enclose the MGS-like domain. The tract at residues 966 to 1115 (GSLPAQGTVF…LHRVIGGVER (150 aa)) is allosteric domain.

Belongs to the CarB family. As to quaternary structure, composed of two chains; the small (or glutamine) chain promotes the hydrolysis of glutamine to ammonia, which is used by the large (or ammonia) chain to synthesize carbamoyl phosphate. Tetramer of heterodimers (alpha,beta)4. The cofactor is Mg(2+). Mn(2+) serves as cofactor.

The enzyme catalyses hydrogencarbonate + L-glutamine + 2 ATP + H2O = carbamoyl phosphate + L-glutamate + 2 ADP + phosphate + 2 H(+). It catalyses the reaction hydrogencarbonate + NH4(+) + 2 ATP = carbamoyl phosphate + 2 ADP + phosphate + 2 H(+). The protein operates within amino-acid biosynthesis; L-arginine biosynthesis; carbamoyl phosphate from bicarbonate: step 1/1. Its pathway is pyrimidine metabolism; UMP biosynthesis via de novo pathway; (S)-dihydroorotate from bicarbonate: step 1/3. In terms of biological role, large subunit of the glutamine-dependent carbamoyl phosphate synthetase (CPSase). CPSase catalyzes the formation of carbamoyl phosphate from the ammonia moiety of glutamine, carbonate, and phosphate donated by ATP, constituting the first step of 2 biosynthetic pathways, one leading to arginine and/or urea and the other to pyrimidine nucleotides. The large subunit (synthetase) binds the substrates ammonia (free or transferred from glutamine from the small subunit), hydrogencarbonate and ATP and carries out an ATP-coupled ligase reaction, activating hydrogencarbonate by forming carboxy phosphate which reacts with ammonia to form carbamoyl phosphate. This chain is Carbamoyl phosphate synthase large chain, found in Mycobacterium bovis (strain ATCC BAA-935 / AF2122/97).